The chain runs to 259 residues: Ribosome maturation factor RimP (259 aa).

The segment at 198–259 is disordered; the sequence is SLGLAPEPPP…RGEIDTSEGD (62 aa). Positions 243 to 253 are enriched in basic and acidic residues; the sequence is LAADKARRGEI.

It belongs to the RimP family.

Its subcellular location is the cytoplasm. Its function is as follows. Required for maturation of 30S ribosomal subunits. This chain is Ribosome maturation factor RimP, found in Rhodopseudomonas palustris (strain TIE-1).